The primary structure comprises 298 residues: DNA-binding transcriptional activator HetR (298 aa).

Residue S152 is part of the active site.

It belongs to the peptidase S48 family. Homodimer; disulfide-linked.

In terms of biological role, controls heterocyst differentiation. Dimerization is required for DNA-binding. Has both a protease and a DNA-binding activity. The polypeptide is DNA-binding transcriptional activator HetR (Nostoc sp. (strain PCC 9229)).